The primary structure comprises 357 residues: Nitronate monooxygenase npaC (357 aa).

Gln-167, Gly-172, and Gly-206 together coordinate FMN.

This sequence belongs to the nitronate monooxygenase family. NMO class I subfamily. FMN serves as cofactor.

Nitronate monooxygenase; part of the gene cluster that mediates the biosynthesis of the deadly neurotoxic nitroalkane 3-nitropropanoic acid (3-NPA) that acts as an antimetabolite of succinate and irreversibly inhibits succinate dehydrogenase and disrupts mitochondrial oxidative phosphorylation. Catalyzes the oxidation of 3-NPA to nitrite and malonic semialdehyde. NpaC is not conserved in all fungal npa clusters and, while it is possible that it serves as a self-protection mechanism against accumulation of 3-NPA (by npaA and npaB) in the producing host, the more likely scenario may be the three enzymes representing an alternative catabolic pathway of aspartate to generate readily metabolizable nitrogen and carbon sources. The chain is Nitronate monooxygenase npaC from Metarhizium robertsii (strain ARSEF 23 / ATCC MYA-3075) (Metarhizium anisopliae (strain ARSEF 23)).